The following is a 348-amino-acid chain: Uroporphyrinogen decarboxylase (348 aa).

Substrate is bound by residues 27–31, F46, D76, Y152, S207, and H320; that span reads RQAGR.

The protein belongs to the uroporphyrinogen decarboxylase family. In terms of assembly, homodimer.

It localises to the cytoplasm. It catalyses the reaction uroporphyrinogen III + 4 H(+) = coproporphyrinogen III + 4 CO2. Its pathway is porphyrin-containing compound metabolism; protoporphyrin-IX biosynthesis; coproporphyrinogen-III from 5-aminolevulinate: step 4/4. Its function is as follows. Catalyzes the decarboxylation of four acetate groups of uroporphyrinogen-III to yield coproporphyrinogen-III. The chain is Uroporphyrinogen decarboxylase from Bacillus cytotoxicus (strain DSM 22905 / CIP 110041 / 391-98 / NVH 391-98).